Here is a 344-residue protein sequence, read N- to C-terminus: 4-dimethylallyltryptophan N-methyltransferase easF (344 aa).

The protein belongs to the methyltransferase superfamily. In terms of assembly, homodimer.

It catalyses the reaction 4-(3-methylbut-2-enyl)-L-tryptophan + S-adenosyl-L-methionine = 4-(3-methylbut-2-enyl)-L-abrine + S-adenosyl-L-homocysteine + H(+). It participates in alkaloid biosynthesis; ergot alkaloid biosynthesis. In terms of biological role, 4-dimethylallyltryptophan N-methyltransferase; part of the gene cluster that mediates the biosynthesis of fungal ergot alkaloid ergovaline, the predominant ergopeptine product in E.festucae var. lolii. DmaW catalyzes the first step of ergot alkaloid biosynthesis by condensing dimethylallyl diphosphate (DMAP) and tryptophan to form 4-dimethylallyl-L-tryptophan. The second step is catalyzed by the methyltransferase easF that methylates 4-dimethylallyl-L-tryptophan in the presence of S-adenosyl-L-methionine, resulting in the formation of 4-dimethylallyl-L-abrine. The catalase easC and the FAD-dependent oxidoreductase easE then transform 4-dimethylallyl-L-abrine to chanoclavine-I which is further oxidized by easD in the presence of NAD(+), resulting in the formation of chanoclavine-I aldehyde. Agroclavine dehydrogenase easG then mediates the conversion of chanoclavine-I aldehyde to agroclavine via a non-enzymatic adduct reaction: the substrate is an iminium intermediate that is formed spontaneously from chanoclavine-I aldehyde in the presence of glutathione. The presence of easA is not required to complete this reaction. Further conversion of agroclavine to paspalic acid is a two-step process involving oxidation of agroclavine to elymoclavine and of elymoclavine to paspalic acid, the second step being performed by the elymoclavine oxidase cloA. Paspalic acid is then further converted to D-lysergic acid. Ergovaline is assembled from D-lysergic acid and three different amino acids by the D-lysergyl-peptide-synthetase composed of a monomudular (lpsB) and a trimodular (lpsA) nonribosomal peptide synthetase subunit. The chain is 4-dimethylallyltryptophan N-methyltransferase easF from Epichloe festucae var. lolii (Neotyphodium lolii).